Reading from the N-terminus, the 337-residue chain is Heme A synthase (337 aa).

5 consecutive transmembrane segments (helical) span residues 6-26, 93-113, 118-138, 154-174, and 192-212; these read ITKWLFISCIMVIAMIVIGGI, GRITALIYIVPLIYFYFKDVI, ILPYIIALLLFCVQGFMGWYM, LAFHLIIAVIIYHILFYQLIK, and LIFSGIAITVIYVQIFLGAMV. His-256 contacts heme. 3 helical membrane passes run 258-278, 285-305, and 308-328; these read LGGYSVFLVVVVLVICLLKIE, IAYFLMIALLMQISTGIITLL, and VPIIIASIHQLFAIILLSIII. His-316 serves as a coordination point for heme.

The protein belongs to the COX15/CtaA family. Type 2 subfamily. As to quaternary structure, interacts with CtaB. Requires heme b as cofactor.

The protein resides in the cell membrane. The enzyme catalyses Fe(II)-heme o + 2 A + H2O = Fe(II)-heme a + 2 AH2. It functions in the pathway porphyrin-containing compound metabolism; heme A biosynthesis; heme A from heme O: step 1/1. Its function is as follows. Catalyzes the conversion of heme O to heme A by two successive hydroxylations of the methyl group at C8. The first hydroxylation forms heme I, the second hydroxylation results in an unstable dihydroxymethyl group, which spontaneously dehydrates, resulting in the formyl group of heme A. This is Heme A synthase from Rickettsia felis (strain ATCC VR-1525 / URRWXCal2) (Rickettsia azadi).